The following is a 151-amino-acid chain: Phospholipase A2 inhibitor BjussuMIP (151 aa).

Positions 1–4 (LANG) are cleaved as a signal peptide. One can recognise a C-type lectin domain in the interval 31-146 (LKYAFLTVHK…CDENLLVVCE (116 aa)). 2 disulfide bridges follow: cysteine 68–cysteine 145 and cysteine 123–cysteine 137. N-linked (GlcNAc...) asparagine glycosylation occurs at asparagine 107.

This sequence belongs to the alpha-type phospholipase A2 inhibitor family. Oligomer. Expressed by the liver.

Its subcellular location is the secreted. Its function is as follows. Inhibits enzymatic, anticoagulant, edema formation, myotoxicity activities induced by snakes phospholipase A2. Is oligomeric, but it is probable that each of its subunits can bind and inactive a PLA2 molecule. The chain is Phospholipase A2 inhibitor BjussuMIP from Bothrops jararacussu (Jararacussu).